Reading from the N-terminus, the 867-residue chain is Inactive tyrosine-protein kinase kin-32 (867 aa).

The FERM domain occupies 3 to 327; it reads GLARVFLIGG…GYQMLYNQRD (325 aa). The Protein kinase domain maps to 367 to 631; it reads ITLKELIGGG…IIEDVRQQII (265 aa). ATP is bound by residues 373 to 381 and K400; that span reads IGGGQFGNV. Positions 662-691 form a coiled coil; that stretch reads TLYRTMEDQKRQAEEDAKWLEQEDDEDEDD. The segment at 674-729 is disordered; the sequence is AEEDAKWLEQEDDEDEDDQDIDQIPSTSHSSVENIRTSNGYLHHTPTSTRSLRFED. Over residues 683-694 the composition is skewed to acidic residues; it reads QEDDEDEDDQDI. Residues 698–724 are compositionally biased toward polar residues; it reads PSTSHSSVENIRTSNGYLHHTPTSTRS.

The protein belongs to the protein kinase superfamily. Tyr protein kinase family. FAK subfamily. In terms of tissue distribution, expressed in body wall muscles and some neurons in the head.

In terms of biological role, has apparently no tyrosine kinase activity in vitro when expressed in mammalian cells. In Caenorhabditis elegans, this protein is Inactive tyrosine-protein kinase kin-32.